Here is a 643-residue protein sequence, read N- to C-terminus: Thioredoxin reductase 3 (643 aa).

The disordered stretch occupies residues 1–53 (MERSPPQSPGPGKAGDAPNRRSGHVRGARVLSPPGRRARLSSPGPSRSSEARE). Arg26 carries the asymmetric dimethylarginine; alternate modification. Omega-N-methylarginine; alternate is present on Arg26. 2 positions are modified to phosphoserine: Ser41 and Ser42. Positions 56–156 (RRHLVGLIER…KLLQEDLAYD (101 aa)) constitute a Glutaredoxin domain. 158 to 187 (DLIIIGGGSGGLSCAKEAAILGKKVMVLDF) is an FAD binding site. A disulfide bridge links Cys203 with Cys208. Lys379 is modified (N6-succinyllysine). His616 (proton acceptor) is an active-site residue. The segment at residues 641–642 (CU) is a cross-link (cysteinyl-selenocysteine (Cys-Sec)). A non-standard amino acid (selenocysteine) is located at residue Sec642.

It belongs to the class-I pyridine nucleotide-disulfide oxidoreductase family. As to quaternary structure, homodimer. The cofactor is FAD.

The protein localises to the cytoplasm. Its subcellular location is the nucleus. It is found in the microsome. It localises to the endoplasmic reticulum. It catalyses the reaction [thioredoxin]-dithiol + NADP(+) = [thioredoxin]-disulfide + NADPH + H(+). In terms of biological role, displays thioredoxin reductase, glutaredoxin and glutathione reductase activities. Catalyzes disulfide bond isomerization. Promotes disulfide bond formation between GPX4 and various sperm proteins and may play a role in sperm maturation by promoting formation of sperm structural components. This is Thioredoxin reductase 3 from Homo sapiens (Human).